The chain runs to 340 residues: Anthranilate phosphoribosyltransferase (340 aa).

5-phospho-alpha-D-ribose 1-diphosphate-binding positions include glycine 80, 83–84 (GD), threonine 88, 90–93 (NIST), 108–116 (KHGNRAMSS), and serine 120. Residue glycine 80 coordinates anthranilate. Mg(2+) is bound at residue serine 92. Residue asparagine 111 participates in anthranilate binding. Position 166 (arginine 166) interacts with anthranilate. The Mg(2+) site is built by aspartate 225 and glutamate 226.

This sequence belongs to the anthranilate phosphoribosyltransferase family. As to quaternary structure, homodimer. The cofactor is Mg(2+).

The catalysed reaction is N-(5-phospho-beta-D-ribosyl)anthranilate + diphosphate = 5-phospho-alpha-D-ribose 1-diphosphate + anthranilate. It participates in amino-acid biosynthesis; L-tryptophan biosynthesis; L-tryptophan from chorismate: step 2/5. In terms of biological role, catalyzes the transfer of the phosphoribosyl group of 5-phosphorylribose-1-pyrophosphate (PRPP) to anthranilate to yield N-(5'-phosphoribosyl)-anthranilate (PRA). The chain is Anthranilate phosphoribosyltransferase from Chloroflexus aggregans (strain MD-66 / DSM 9485).